We begin with the raw amino-acid sequence, 470 residues long: mRNA export factor ICP27 homolog (470 aa).

2 disordered regions span residues Met1–Asp31 and Phe73–Arg202. The segment covering Phe73–Pro85 has biased composition (polar residues). Composition is skewed to basic residues over residues His94–Asn107 and Arg178–Asn187. The Zn(2+) site is built by Cys359, His437, Cys441, and Cys446. The CHC2-type zinc-finger motif lies at Cys359–Cys446.

The protein belongs to the HHV-1 ICP27 protein family. As to quaternary structure, homodimer. Homodimerization is required for transactivation. Associates in a complex with RNA, and host export factors NXF1/TAP and ALYREF; these interactions allow nuclear export of viral transcripts. Interacts with three host shuttling SR proteins SRSF1, SRSF3 and SRSF7. Interacts with host SRPK1. Interacts with IE62; this interaction enhances IE62 transactivation.

Its subcellular location is the host cytoplasm. It is found in the host nucleus. In terms of biological role, multifunctional regulator of the expression of viral genes that mediates nuclear export of viral intronless mRNAs. This immediate early (EI) protein promotes the nuclear export of viral intronless mRNAs by interacting with mRNAs and host NXF1/TAP. This Equine herpesvirus 1 (strain Kentucky A) (EHV-1) protein is mRNA export factor ICP27 homolog.